Consider the following 211-residue polypeptide: Troponin I, cardiac muscle (211 aa).

The interval 1 to 24 (MADESSDAAGEPQPAPAPVRRRSS) is disordered. N-acetylalanine is present on alanine 2. Residues serine 5 and serine 6 each carry the phosphoserine modification. A phosphoserine; by PKA and PKD/PRKD1 mark is found at serine 23 and serine 24. A Phosphotyrosine modification is found at tyrosine 27. Residue threonine 32 is modified to Phosphothreonine; by STK4/MST1. The involved in binding TNC stretch occupies residues 33–80 (EPHAKKKSKISASRKLQLKTLMLQIAKQEMEREAEERRGEKGRVLRTR). Phosphoserine; by PKC/PRKCE occurs at positions 43 and 45. Position 52 is a phosphothreonine; by STK4/MST1 (threonine 52). Position 79 is a phosphothreonine (threonine 79). 2 positions are modified to phosphothreonine; by STK4/MST1: threonine 130 and threonine 144. Positions 130-151 (TQKIYDLRGKFKRPTLRRVRIS) are involved in binding TNC and actin. Residues serine 151, serine 167, and serine 200 each carry the phosphoserine modification.

Belongs to the troponin I family. In terms of assembly, interacts with TRIM63. Binds to actin and tropomyosin. Interacts with STK4/MST1. Post-translationally, phosphorylated at Ser-23 and Ser-24 by PRKD1; phosphorylation reduces myofilament calcium sensitivity. Phosphorylated preferentially at Thr-32. Phosphorylation by STK4/MST1 alters its binding affinity to TNNC1 (cardiac Tn-C) and TNNT2 (cardiac Tn-T). Phosphorylated at Ser-43 and Ser-45 by PRKCE; phosphorylation increases myocardium contractile dysfunction.

In terms of biological role, troponin I is the inhibitory subunit of troponin, the thin filament regulatory complex which confers calcium-sensitivity to striated muscle actomyosin ATPase activity. This is Troponin I, cardiac muscle (Tnni3) from Mus musculus (Mouse).